Reading from the N-terminus, the 447-residue chain is N-succinylarginine dihydrolase (447 aa).

Substrate-binding positions include 19–28 (AGLSFGNEAS), asparagine 110, and 137–138 (HR). Glutamate 174 is an active-site residue. A substrate-binding site is contributed by arginine 212. Residue histidine 248 is part of the active site. Residues aspartate 250 and asparagine 359 each contribute to the substrate site. Cysteine 365 (nucleophile) is an active-site residue.

It belongs to the succinylarginine dihydrolase family. Homodimer.

The catalysed reaction is N(2)-succinyl-L-arginine + 2 H2O + 2 H(+) = N(2)-succinyl-L-ornithine + 2 NH4(+) + CO2. The protein operates within amino-acid degradation; L-arginine degradation via AST pathway; L-glutamate and succinate from L-arginine: step 2/5. Functionally, catalyzes the hydrolysis of N(2)-succinylarginine into N(2)-succinylornithine, ammonia and CO(2). The sequence is that of N-succinylarginine dihydrolase from Salmonella paratyphi A (strain ATCC 9150 / SARB42).